The primary structure comprises 196 residues: Probable histone chaperone ASF1A (196 aa).

Residues 146–157 are compositionally biased toward basic and acidic residues; it reads VTKFPIDFHPEE. The segment at 146 to 196 is disordered; that stretch reads VTKFPIDFHPEEEQTAATAAPPEQSDEQQPNVNGEAQVLPDQSVEPKPEES.

Belongs to the ASF1 family. As to quaternary structure, interacts with histone H3 and histone H4. Component of the HIRA complex made of UBN1, UBN2, ASF1A, CABIN1 and HIRA. Interacts with HIRA. In terms of tissue distribution, expressed in leaves and flower buds.

It localises to the nucleus. It is found in the nucleolus. In terms of biological role, histone chaperone that facilitates histone deposition and histone exchange and removal during nucleosome assembly and disassembly. While encoded by a region of the Arabidopsis thaliana genome that is homologous to the Brassica S-locus for self incompatibility, this protein may not play the same role in Arabidopsis thaliana. The polypeptide is Probable histone chaperone ASF1A (ASF1A) (Arabidopsis thaliana (Mouse-ear cress)).